Consider the following 184-residue polypeptide: Thymidine kinase (184 aa).

ATP is bound by residues 15 to 22 (GPMFSGKS) and 89 to 92 (DEIQ). Residue E90 is the Proton acceptor of the active site. Zn(2+) is bound by residues C146, C149, C178, and C181.

The protein belongs to the thymidine kinase family. In terms of assembly, homotetramer.

Its subcellular location is the cytoplasm. It catalyses the reaction thymidine + ATP = dTMP + ADP + H(+). The chain is Thymidine kinase from Mesomycoplasma hyopneumoniae (strain 232) (Mycoplasma hyopneumoniae).